We begin with the raw amino-acid sequence, 125 residues long: Large ribosomal subunit protein bL12 (125 aa).

It belongs to the bacterial ribosomal protein bL12 family. In terms of assembly, homodimer. Part of the ribosomal stalk of the 50S ribosomal subunit. Forms a multimeric L10(L12)X complex, where L10 forms an elongated spine to which 2 to 4 L12 dimers bind in a sequential fashion. Binds GTP-bound translation factors.

In terms of biological role, forms part of the ribosomal stalk which helps the ribosome interact with GTP-bound translation factors. Is thus essential for accurate translation. The chain is Large ribosomal subunit protein bL12 from Ruegeria sp. (strain TM1040) (Silicibacter sp.).